Here is a 471-residue protein sequence, read N- to C-terminus: Trigger factor (471 aa).

In terms of domain architecture, PPIase FKBP-type spans 162–243; that stretch reads GDFVVMDLVA…VSQVQEQELP (82 aa). The tract at residues 436–471 is disordered; the sequence is LRPDGTIGEPEDEIEAETEIEIEPAAETDTEADTEQ. Acidic residues predominate over residues 444-471; it reads EPEDEIEAETEIEIEPAAETDTEADTEQ.

Belongs to the FKBP-type PPIase family. Tig subfamily.

The protein resides in the cytoplasm. It catalyses the reaction [protein]-peptidylproline (omega=180) = [protein]-peptidylproline (omega=0). Functionally, involved in protein export. Acts as a chaperone by maintaining the newly synthesized protein in an open conformation. Functions as a peptidyl-prolyl cis-trans isomerase. The sequence is that of Trigger factor from Nocardioides sp. (strain ATCC BAA-499 / JS614).